Consider the following 394-residue polypeptide: uncharacterized protein (394 aa).

12 helical membrane passes run 13–35 (AIIG…VPVL), 50–72 (VGVA…GWLS), 79–97 (LIIN…IAWS), 107–129 (GRGL…ELVL), 136–158 (IMGL…SPII), 168–190 (FLIN…PASL), 218–240 (INLS…PVEL), 250–272 (VPEI…CICF), 277–299 (VLYS…GIFL), 309–331 (ILGL…ALVN), 344–366 (AIYS…ILFS), and 371–393 (FEVL…LYLI).

It belongs to the major facilitator superfamily.

It localises to the cell membrane. This is an uncharacterized protein from Buchnera aphidicola subsp. Baizongia pistaciae (strain Bp).